Reading from the N-terminus, the 20-residue chain is Pregnancy-associated glycoprotein 75 (20 aa).

It belongs to the peptidase A1 family. N-glycosylated. In terms of tissue distribution, expressed in chorionic epithelium (trophectoderm).

The protein localises to the secreted. The chain is Pregnancy-associated glycoprotein 75 from Bubalus bubalis (Domestic water buffalo).